A 472-amino-acid polypeptide reads, in one-letter code: Probable serine/threonine-protein kinase At1g01540 (472 aa).

The helical transmembrane segment at 24-44 (LWVVIGILLGSLIVIALFLLS) threads the bilayer. Threonine 67 and threonine 143 each carry phosphothreonine. The Protein kinase domain occupies 154–431 (LCEENVIGEG…IHMLEAEDLL (278 aa)). ATP-binding positions include 160-168 (IGEGGYGIV) and lysine 182. Tyrosine 227 bears the Phosphotyrosine mark. Aspartate 280 functions as the Proton acceptor in the catalytic mechanism. At serine 284 the chain carries Phosphoserine. Threonine 314 and threonine 319 each carry phosphothreonine. Tyrosine 327 is modified (phosphotyrosine). Residues 437-449 (RTTRDHGSRERQE) show a composition bias toward basic and acidic residues. The disordered stretch occupies residues 437 to 472 (RTTRDHGSRERQETAVVAAGSESGESGSRHHQQKQR). The segment covering 451–462 (AVVAAGSESGES) has biased composition (low complexity).

This sequence belongs to the protein kinase superfamily. Ser/Thr protein kinase family.

It localises to the membrane. The enzyme catalyses L-seryl-[protein] + ATP = O-phospho-L-seryl-[protein] + ADP + H(+). It catalyses the reaction L-threonyl-[protein] + ATP = O-phospho-L-threonyl-[protein] + ADP + H(+). This is Probable serine/threonine-protein kinase At1g01540 from Arabidopsis thaliana (Mouse-ear cress).